The primary structure comprises 342 residues: Signaling lymphocytic activation molecule (342 aa).

Positions 1-26 (MDSRGFLSLRCLLVLALASKLSCGTG) are cleaved as a signal peptide. The Extracellular portion of the chain corresponds to 27–237 (ESLMNCPEVP…CRPESSVPRQ (211 aa)). Residues 29–138 (LMNCPEVPGK…QHFCLQLKLY (110 aa)) enclose the Ig-like V-type domain. 7 N-linked (GlcNAc...) asparagine glycosylation sites follow: Asn57, Asn102, Asn125, Asn150, Asn157, Asn189, and Asn217. The 80-residue stretch at 144–223 (PEIKVLNWTQ…PVSNRSWSFN (80 aa)) folds into the Ig-like C2-type domain. 2 cysteine pairs are disulfide-bonded: Cys158-Cys228 and Cys164-Cys209. The helical transmembrane segment at 238-261 (WRLYAGLFLGGIVGVILIFEVVLL) threads the bilayer. Topologically, residues 262–342 (LLRRRGKTNH…VYASVTFPES (81 aa)) are cytoplasmic. The ITSM 1 signature appears at 282-287 (TIYAQV). 3 positions are modified to phosphotyrosine; by FYN: Tyr284, Tyr310, and Tyr334. An SH2-binding motif is present at residues 310 to 315 (YVAATE). The short motif at 332–337 (TVYASV) is the ITSM 2 element.

Interacts (via cytoplasmic domain) with SH2D1A and SH2D1B; SH2D1A mediates association with FYN. Interacts (via cytoplasmic domain phosphorylated on tyrosine residues) with INPP5D and PTPN11; presence of SH2D1A facilitates binding to INPP5D. Interacts with MAP4K1. Interacts with PIK3C3, BECN1 and UVRAG; indicative for an association with PI3K complex II (PI3KC3-C2). Interacts with canine distemper virus HN protein; suggesting that it may serve as a receptor. Post-translationally, phosphorylated on tyrosine residues by FYN.

Its subcellular location is the cell membrane. Its function is as follows. Self-ligand receptor of the signaling lymphocytic activation molecule (SLAM) family. SLAM receptors triggered by homo- or heterotypic cell-cell interactions are modulating the activation and differentiation of a wide variety of immune cells and thus are involved in the regulation and interconnection of both innate and adaptive immune response. Activities are controlled by presence or absence of small cytoplasmic adapter proteins, SH2D1A/SAP and/or SH2D1B/EAT-2. SLAMF1-induced signal-transduction events in T-lymphocytes are different from those in B-cells. Two modes of SLAMF1 signaling seem to exist: one depending on SH2D1A (and perhaps SH2D1B) and another in which protein-tyrosine phosphatase 2C (PTPN11)-dependent signal transduction operates. Initially it has been proposed that association with SH2D1A prevents binding to inhibitory effectors including INPP5D/SHIP1 and PTPN11/SHP-2. However, signaling is also regulated by SH2D1A which can simultaneously interact with and recruit FYN which subsequently phosphorylates and activates SLAMF1. Mediates IL-2-independent proliferation of activated T cells during immune responses and induces IFN-gamma production. Downstreaming signaling involves INPP5D/SHIP1, DOK1 and DOK2 leading to inhibited IFN-gamma production in T-cells, and PRKCQ, BCL10 and NFKB1 leading to increased T-cell activation and Th2 cytokine production. Promotes T-cell receptor-induced IL-4 secretion by CD4(+) cells. Inhibits antigen receptor-mediated production of IFN-gamma, but not IL-2, in CD4(-)/CD8(-) T-cells. Required for IL-4 production by germinal centers T follicular helper (T(Fh))cells. May inhibit CD40-induced signal transduction in monocyte-derived dendritic cells. May play a role in allergic responses and may regulate allergen-induced Th2 cytokine and Th1 cytokine secretion. In conjunction with SLAMF6 controls the transition between positive selection and the subsequent expansion and differentiation of the thymocytic natural killer T (NKT) cell lineage. Involved in the peripheral differentiation of indifferent natural killer T (iNKT) cells toward a regulatory NKT2 type. In macrophages involved in down-regulation of IL-12, TNF-alpha and nitric oxide in response to lipopolysaccharide (LPS). In B-cells activates the ERK signaling pathway independently of SH2D1A but implicating both, SYK and INPP5D, and activates Akt signaling dependent on SYK and SH2D1A. In conjunction with SLAMF5 and SLAMF6 may be a negative regulator of the humoral immune response. This chain is Signaling lymphocytic activation molecule (SLAMF1), found in Canis lupus familiaris (Dog).